The sequence spans 135 residues: Probable histone H2A.2 (135 aa).

Belongs to the histone H2A family. As to quaternary structure, the nucleosome is a histone octamer containing two molecules each of H2A, H2B, H3 and H4 assembled in one H3-H4 heterotetramer and two H2A-H2B heterodimers. The octamer wraps approximately 147 bp of DNA.

It localises to the nucleus. Its subcellular location is the chromosome. In terms of biological role, core component of nucleosome. Nucleosomes wrap and compact DNA into chromatin, limiting DNA accessibility to the cellular machineries which require DNA as a template. Histones thereby play a central role in transcription regulation, DNA repair, DNA replication and chromosomal stability. DNA accessibility is regulated via a complex set of post-translational modifications of histones, also called histone code, and nucleosome remodeling. The chain is Probable histone H2A.2 from Oryza sativa subsp. indica (Rice).